The primary structure comprises 466 residues: Soluble pyridine nucleotide transhydrogenase (466 aa).

36 to 45 provides a ligand contact to FAD; the sequence is ERYQNVGGGC.

This sequence belongs to the class-I pyridine nucleotide-disulfide oxidoreductase family. The cofactor is FAD.

The protein localises to the cytoplasm. The enzyme catalyses NAD(+) + NADPH = NADH + NADP(+). Its function is as follows. Conversion of NADPH, generated by peripheral catabolic pathways, to NADH, which can enter the respiratory chain for energy generation. The protein is Soluble pyridine nucleotide transhydrogenase of Escherichia coli O81 (strain ED1a).